The following is a 122-amino-acid chain: Serum amyloid A-3 protein (122 aa).

A signal peptide spans 1–18; the sequence is MKPSIAIILCILILGVDS. The disordered stretch occupies residues 87-122; the sequence is TGHGAEDSRADQFANEWGRSGKDPNHFRPAGLPKRY.

The protein belongs to the SAA family. As to expression, found in various tissues.

It is found in the secreted. In terms of biological role, major acute phase reactant. Apolipoprotein of the HDL complex. In vitro exhibits antimicrobial activity against Escherichia coli, Streptococcus uberis and Pseudomonas aeruginosa. This Mus musculus (Mouse) protein is Serum amyloid A-3 protein (Saa3).